The following is a 255-amino-acid chain: Type III pantothenate kinase (255 aa).

Residue 6–13 participates in ATP binding; it reads DIGNTTSE. Substrate contacts are provided by residues tyrosine 100 and 107–110; that span reads GIDR. Aspartate 109 (proton acceptor) is an active-site residue. A K(+)-binding site is contributed by aspartate 129. Threonine 132 contributes to the ATP binding site. Threonine 184 is a substrate binding site.

The protein belongs to the type III pantothenate kinase family. In terms of assembly, homodimer. NH4(+) is required as a cofactor. It depends on K(+) as a cofactor.

It is found in the cytoplasm. The enzyme catalyses (R)-pantothenate + ATP = (R)-4'-phosphopantothenate + ADP + H(+). Its pathway is cofactor biosynthesis; coenzyme A biosynthesis; CoA from (R)-pantothenate: step 1/5. In terms of biological role, catalyzes the phosphorylation of pantothenate (Pan), the first step in CoA biosynthesis. This Persephonella marina (strain DSM 14350 / EX-H1) protein is Type III pantothenate kinase.